A 461-amino-acid polypeptide reads, in one-letter code: D-phenylhydantoinase (461 aa).

Residues His-59, His-61, and Lys-151 each coordinate a divalent metal cation. Lys-151 is subject to N6-carboxylysine. Tyr-156 contacts substrate. Positions 182 and 239 each coordinate a divalent metal cation. Position 286 (Ser-286) interacts with substrate. Asp-313 contacts a divalent metal cation. Asn-335 provides a ligand contact to substrate.

This sequence belongs to the metallo-dependent hydrolases superfamily. Hydantoinase/dihydropyrimidinase family. In terms of assembly, homotetramer. It depends on Zn(2+) as a cofactor. Requires Ni(2+) as cofactor. Co(2+) is required as a cofactor. Mn(2+) serves as cofactor. Carboxylation allows a single lysine to coordinate two divalent metal cations.

The enzyme catalyses D-5-phenylhydantoin + H2O = N-carbamoyl-D-phenylglycine + H(+). In terms of biological role, catalyzes the stereospecific hydrolysis of the cyclic amide bond of D-hydantoin derivatives with an aromatic side chains at the 5'-position. Has no activity on dihydropyrimidines. The physiological function is unknown. The protein is D-phenylhydantoinase (hyuA) of Escherichia coli (strain K12).